A 724-amino-acid polypeptide reads, in one-letter code: Membrane protein YdfJ (724 aa).

Helical transmembrane passes span 17 to 37 (IKAI…AVTL), 179 to 199 (IVGI…LLIA), 200 to 220 (GLPI…VLIG), 231 to 251 (LSLA…FIFT), 277 to 297 (AVVF…VVNI), 309 to 329 (LSVL…LSIA), 360 to 380 (IMLS…SMHL), 512 to 532 (AIPV…TIVF), 539 to 559 (LVAV…CVFV), 575 to 595 (GPIL…LAMD), 627 to 647 (PVVT…IFAG), and 655 to 675 (GLAL…TLIP).

The protein belongs to the resistance-nodulation-cell division (RND) (TC 2.A.6) family. MmpL subfamily.

It is found in the cell membrane. The protein is Membrane protein YdfJ (ydfJ) of Bacillus subtilis (strain 168).